The sequence spans 198 residues: Imidazoleglycerol-phosphate dehydratase (198 aa).

Belongs to the imidazoleglycerol-phosphate dehydratase family.

The protein resides in the cytoplasm. It carries out the reaction D-erythro-1-(imidazol-4-yl)glycerol 3-phosphate = 3-(imidazol-4-yl)-2-oxopropyl phosphate + H2O. The protein operates within amino-acid biosynthesis; L-histidine biosynthesis; L-histidine from 5-phospho-alpha-D-ribose 1-diphosphate: step 6/9. This Nitratidesulfovibrio vulgaris (strain DP4) (Desulfovibrio vulgaris) protein is Imidazoleglycerol-phosphate dehydratase.